We begin with the raw amino-acid sequence, 851 residues long: Envelope glycoprotein gp160 (851 aa).

The signal sequence occupies residues 1-32 (MRVKEKYQHLWRWGWRWGTMLLGMLMICSATE). Residues 33–679 (KLWVTVYFGV…ITNWLWYIKL (647 aa)) lie on the Extracellular side of the membrane. Cys54 and Cys74 are oxidised to a cystine. N-linked (GlcNAc...) asparagine; by host glycans are attached at residues Asn88, Asn136, Asn141, Asn156, Asn160, Asn186, Asn197, Asn230, Asn234, Asn241, Asn262, Asn276, Asn295, Asn301, Asn332, Asn339, and Asn356. 5 disulfide bridges follow: Cys119-Cys205, Cys126-Cys196, Cys131-Cys157, Cys218-Cys247, and Cys228-Cys239. The V1 stretch occupies residues 131–156 (CTDLKNDTNTNSSSGRMIMEKGEIKN). The interval 157-196 (CSFNISTSKRGKVQKEYAFFYKLDIIPIDNDTTSYTLTSC) is V2. Residues 296–330 (CTRPNNNTRKKIRIQRGPGRAFVTIGKIGNMRQAH) form a V3 region. The cysteines at positions 296 and 331 are disulfide-linked. The CD4-binding loop stretch occupies residues 364–374 (SSGGDPEIVTH). 2 cysteine pairs are disulfide-bonded: Cys378/Cys440 and Cys385/Cys413. Residues 385 to 413 (CNSTQLFNSTWSTKGSNNTEGSDTITLPC) are V4. N-linked (GlcNAc...) asparagine; by host glycosylation is found at Asn386, Asn392, Asn401, Asn443, and Asn458. 2 V5 regions span residues 456 to 466 (SNNESEIFRPG) and 458 to 466 (NESEIFRPG). The segment at 507–527 (AVGIGALFLGFLGAAGSTMGA) is fusion peptide. The immunosuppression stretch occupies residues 569 to 587 (KQLQARILAVERYLKDQQL). Cys593 and Cys599 are disulfide-bonded. N-linked (GlcNAc...) asparagine; by host glycosylation is found at Asn606, Asn611, Asn620, Asn632, and Asn669. A coiled-coil region spans residues 628 to 662 (REINNYTSLIHSLIEESQNQQEKNEQELLELDKWA). An MPER; binding to GalCer region spans residues 657–678 (ELDKWASLWNWFNITNWLWYIK). A helical transmembrane segment spans residues 680 to 700 (FIMIVGGLVGLRIVFAVLSIV). Over 701-851 (NRVRQGYSPL…IRQGLERILL (151 aa)) the chain is Cytoplasmic. Positions 707 to 710 (YSPL) match the YXXL motif; contains endocytosis signal motif. The disordered stretch occupies residues 713–735 (QTHLPNPRGPDRPEGIEEEGGER). The S-palmitoyl cysteine; by host moiety is linked to residue Cys759. Positions 850–851 (LL) match the Di-leucine internalization motif motif.

The protein belongs to the HIV-1 env protein family. In terms of assembly, the mature envelope protein (Env) consists of a homotrimer of non-covalently associated gp120-gp41 heterodimers. The resulting complex protrudes from the virus surface as a spike. There seems to be as few as 10 spikes on the average virion. Interacts with host CD4, CCR5 and CXCR4. Gp120 also interacts with the C-type lectins CD209/DC-SIGN and CLEC4M/DC-SIGNR (collectively referred to as DC-SIGN(R)). Gp120 and gp41 interact with GalCer. Gp120 interacts with host ITGA4/ITGB7 complex; on CD4+ T-cells, this interaction results in rapid activation of integrin ITGAL/LFA-1, which facilitates efficient cell-to-cell spreading of HIV-1. Gp120 interacts with cell-associated heparan sulfate; this interaction increases virus infectivity on permissive cells and may be involved in infection of CD4- cells. The mature envelope protein (Env) consists of a homotrimer of non-covalently associated gp120-gp41 heterodimers. The resulting complex protrudes from the virus surface as a spike. There seems to be as few as 10 spikes on the average virion. In terms of processing, highly glycosylated by host. The high number of glycan on the protein is reffered to as 'glycan shield' because it contributes to hide protein sequence from adaptive immune system. Palmitoylation of the transmembrane protein and of Env polyprotein (prior to its proteolytic cleavage) is essential for their association with host cell membrane lipid rafts. Palmitoylation is therefore required for envelope trafficking to classical lipid rafts, but not for viral replication. Post-translationally, specific enzymatic cleavages in vivo yield mature proteins. Envelope glycoproteins are synthesized as an inactive precursor that is heavily N-glycosylated and processed likely by host cell furin in the Golgi to yield the mature SU and TM proteins. The cleavage site between SU and TM requires the minimal sequence [KR]-X-[KR]-R. About 2 of the 9 disulfide bonds of gp41 are reduced by P4HB/PDI, following binding to CD4 receptor.

Its subcellular location is the virion membrane. The protein resides in the host cell membrane. It localises to the host endosome membrane. Oligomerizes in the host endoplasmic reticulum into predominantly trimers. In a second time, gp160 transits in the host Golgi, where glycosylation is completed. The precursor is then proteolytically cleaved in the trans-Golgi and thereby activated by cellular furin or furin-like proteases to produce gp120 and gp41. Its function is as follows. Attaches the virus to the host lymphoid cell by binding to the primary receptor CD4. This interaction induces a structural rearrangement creating a high affinity binding site for a chemokine coreceptor like CXCR4 and/or CCR5. Acts as a ligand for CD209/DC-SIGN and CLEC4M/DC-SIGNR, which are respectively found on dendritic cells (DCs), and on endothelial cells of liver sinusoids and lymph node sinuses. These interactions allow capture of viral particles at mucosal surfaces by these cells and subsequent transmission to permissive cells. HIV subverts the migration properties of dendritic cells to gain access to CD4+ T-cells in lymph nodes. Virus transmission to permissive T-cells occurs either in trans (without DCs infection, through viral capture and transmission), or in cis (following DCs productive infection, through the usual CD4-gp120 interaction), thereby inducing a robust infection. In trans infection, bound virions remain infectious over days and it is proposed that they are not degraded, but protected in non-lysosomal acidic organelles within the DCs close to the cell membrane thus contributing to the viral infectious potential during DCs' migration from the periphery to the lymphoid tissues. On arrival at lymphoid tissues, intact virions recycle back to DCs' cell surface allowing virus transmission to CD4+ T-cells. In terms of biological role, acts as a class I viral fusion protein. Under the current model, the protein has at least 3 conformational states: pre-fusion native state, pre-hairpin intermediate state, and post-fusion hairpin state. During fusion of viral and target intracellular membranes, the coiled coil regions (heptad repeats) assume a trimer-of-hairpins structure, positioning the fusion peptide in close proximity to the C-terminal region of the ectodomain. The formation of this structure appears to drive apposition and subsequent fusion of viral and target cell membranes. Complete fusion occurs in host cell endosomes and is dynamin-dependent, however some lipid transfer might occur at the plasma membrane. The virus undergoes clathrin-dependent internalization long before endosomal fusion, thus minimizing the surface exposure of conserved viral epitopes during fusion and reducing the efficacy of inhibitors targeting these epitopes. Membranes fusion leads to delivery of the nucleocapsid into the cytoplasm. This is Envelope glycoprotein gp160 from Homo sapiens (Human).